The sequence spans 111 residues: MKKSYRVKKEKDFKALFDAGHSVANRKFVVYCLDRNLPHFRVGLSVSKRLGNAVTRNRVKRRLRHALMDMSSQLENQDFVVIARKGVEDLSYQDIYSNLVHVLKIAKLYKD.

This sequence belongs to the RnpA family. Consists of a catalytic RNA component (M1 or rnpB) and a protein subunit.

The catalysed reaction is Endonucleolytic cleavage of RNA, removing 5'-extranucleotides from tRNA precursor.. In terms of biological role, RNaseP catalyzes the removal of the 5'-leader sequence from pre-tRNA to produce the mature 5'-terminus. It can also cleave other RNA substrates such as 4.5S RNA. The protein component plays an auxiliary but essential role in vivo by binding to the 5'-leader sequence and broadening the substrate specificity of the ribozyme. The chain is Ribonuclease P protein component from Streptococcus thermophilus (strain ATCC BAA-491 / LMD-9).